A 431-amino-acid polypeptide reads, in one-letter code: Enolase (431 aa).

A (2R)-2-phosphoglycerate-binding site is contributed by Gln167. Glu209 functions as the Proton donor in the catalytic mechanism. Residues Asp246, Glu289, and Asp316 each contribute to the Mg(2+) site. (2R)-2-phosphoglycerate-binding residues include Lys341, Arg370, Ser371, and Lys392. Lys341 acts as the Proton acceptor in catalysis.

It belongs to the enolase family. In terms of assembly, component of the RNA degradosome, a multiprotein complex involved in RNA processing and mRNA degradation. The cofactor is Mg(2+).

The protein localises to the cytoplasm. It localises to the secreted. The protein resides in the cell surface. It carries out the reaction (2R)-2-phosphoglycerate = phosphoenolpyruvate + H2O. It participates in carbohydrate degradation; glycolysis; pyruvate from D-glyceraldehyde 3-phosphate: step 4/5. Functionally, catalyzes the reversible conversion of 2-phosphoglycerate (2-PG) into phosphoenolpyruvate (PEP). It is essential for the degradation of carbohydrates via glycolysis. The chain is Enolase from Shewanella baltica (strain OS155 / ATCC BAA-1091).